The sequence spans 299 residues: Oxygen-dependent coproporphyrinogen-III oxidase (299 aa).

Residue Ser-92 participates in substrate binding. Residues His-96 and His-106 each coordinate a divalent metal cation. The active-site Proton donor is His-106. 108-110 (NVR) is a substrate binding site. A divalent metal cation contacts are provided by His-145 and His-175. Residues 240–275 (YVEFNLVWDRGTLFGLQTGGRTESILMSMPPLVRWE) are important for dimerization. Position 258–260 (258–260 (GGR)) interacts with substrate.

The protein belongs to the aerobic coproporphyrinogen-III oxidase family. In terms of assembly, homodimer. It depends on a divalent metal cation as a cofactor.

The protein resides in the cytoplasm. The catalysed reaction is coproporphyrinogen III + O2 + 2 H(+) = protoporphyrinogen IX + 2 CO2 + 2 H2O. It functions in the pathway porphyrin-containing compound metabolism; protoporphyrin-IX biosynthesis; protoporphyrinogen-IX from coproporphyrinogen-III (O2 route): step 1/1. Involved in the heme biosynthesis. Catalyzes the aerobic oxidative decarboxylation of propionate groups of rings A and B of coproporphyrinogen-III to yield the vinyl groups in protoporphyrinogen-IX. This is Oxygen-dependent coproporphyrinogen-III oxidase from Shigella boydii serotype 18 (strain CDC 3083-94 / BS512).